A 477-amino-acid polypeptide reads, in one-letter code: Serine/threonine-protein kinase prp4 (477 aa).

Residues 25 to 123 are disordered; it reads KYQQTGNGHS…SPSVKRQNTG (99 aa). A compositionally biased stretch (basic and acidic residues) spans 38 to 47; it reads IPEKKLKEDV. Over residues 74–86 the composition is skewed to polar residues; sequence EGSNSNTKLDVTN. The span at 87–98 shows a compositional bias: low complexity; it reads STTSDSPSIKSS. S92 bears the Phosphoserine mark. Polar residues predominate over residues 113–123; the sequence is PSPSVKRQNTG. Positions 159 to 477 constitute a Protein kinase domain; it reads YIVQSNLGKG…ALKHPFFIKK (319 aa). ATP is bound by residues 165-173 and K188; that span reads LGKGMFSTV. Catalysis depends on D286, which acts as the Proton acceptor. A Phosphotyrosine modification is found at Y320.

This sequence belongs to the protein kinase superfamily. CMGC Ser/Thr protein kinase family.

The enzyme catalyses L-seryl-[protein] + ATP = O-phospho-L-seryl-[protein] + ADP + H(+). It catalyses the reaction L-threonyl-[protein] + ATP = O-phospho-L-threonyl-[protein] + ADP + H(+). Has a role in pre-mRNA splicing and is essential for growth. Phosphorylates srp1. The polypeptide is Serine/threonine-protein kinase prp4 (prp4) (Schizosaccharomyces pombe (strain 972 / ATCC 24843) (Fission yeast)).